The primary structure comprises 444 residues: MSNTILQHLPIGQKVGIAFSGGLDTSAALLWMRQKGAVPYAYTANLGQPDEEDYNAIPRKAMEYGAEKARLIDCRNQLAHEGIAAIQCGAFHISTGGVTYFNTTPLGRAVTGTMLVSAMKEDDVNIWGDGSTFKGNDIERFYRYGLLTNPSLRIYKPWLDNQFIDELGGRQEMSEFLIANGFDYKMSAEKAYSTDSNMLGATHEAKDLEYLNSGIRIVKPIMGVAFWRDDVTVKAEEVTVGFEDGVPVTLNGQSFSSAVELFLEANRIGGRHGLGMSDQIENRIIEAKSRGIYEAPGMALLHIAYERLVTAIHNEDTIEQYRINGLRLGRLLYQGRWFDPQALMLRETAQRWVARAVTGEVTLELRRGNDYSILNTVSPNMTYHPERLSMEKVENAPFDPSDRIGQLTMRNLDITDTRDKLGIYTHTGLLTVGKDSMLPQLDKK.

ATP-binding positions include 18 to 26 and Ala-44; that span reads AFSGGLDTS. Residue Tyr-100 participates in L-citrulline binding. ATP contacts are provided by Gly-130 and Thr-132. 3 residues coordinate L-aspartate: Thr-132, Asn-136, and Asp-137. Asn-136 serves as a coordination point for L-citrulline. Residue Asp-137 coordinates ATP. Residues Arg-140 and Ser-193 each contribute to the L-citrulline site. Asp-195 lines the ATP pocket. Thr-202, Glu-204, and Glu-281 together coordinate L-citrulline.

This sequence belongs to the argininosuccinate synthase family. Type 2 subfamily. As to quaternary structure, homotetramer.

Its subcellular location is the cytoplasm. The catalysed reaction is L-citrulline + L-aspartate + ATP = 2-(N(omega)-L-arginino)succinate + AMP + diphosphate + H(+). It functions in the pathway amino-acid biosynthesis; L-arginine biosynthesis; L-arginine from L-ornithine and carbamoyl phosphate: step 2/3. This chain is Argininosuccinate synthase, found in Histophilus somni (strain 2336) (Haemophilus somnus).